The chain runs to 327 residues: Methionyl-tRNA formyltransferase (327 aa).

Residue S121–P124 participates in (6S)-5,6,7,8-tetrahydrofolate binding.

It belongs to the Fmt family.

It carries out the reaction L-methionyl-tRNA(fMet) + (6R)-10-formyltetrahydrofolate = N-formyl-L-methionyl-tRNA(fMet) + (6S)-5,6,7,8-tetrahydrofolate + H(+). In terms of biological role, attaches a formyl group to the free amino group of methionyl-tRNA(fMet). The formyl group appears to play a dual role in the initiator identity of N-formylmethionyl-tRNA by promoting its recognition by IF2 and preventing the misappropriation of this tRNA by the elongation apparatus. The protein is Methionyl-tRNA formyltransferase of Burkholderia multivorans (strain ATCC 17616 / 249).